Consider the following 116-residue polypeptide: Phosphoribosyl-ATP pyrophosphatase (116 aa).

The protein belongs to the PRA-PH family.

It is found in the cytoplasm. The catalysed reaction is 1-(5-phospho-beta-D-ribosyl)-ATP + H2O = 1-(5-phospho-beta-D-ribosyl)-5'-AMP + diphosphate + H(+). It functions in the pathway amino-acid biosynthesis; L-histidine biosynthesis; L-histidine from 5-phospho-alpha-D-ribose 1-diphosphate: step 2/9. This chain is Phosphoribosyl-ATP pyrophosphatase, found in Nitrobacter winogradskyi (strain ATCC 25391 / DSM 10237 / CIP 104748 / NCIMB 11846 / Nb-255).